The chain runs to 588 residues: Protein disulfide-isomerase-like protein of the testis (588 aa).

An N-terminal signal peptide occupies residues 1–20 (MELLWTPLLLVAACLSEVLG). N55, N157, and N337 each carry an N-linked (GlcNAc...) asparagine glycan. The 64-residue stretch at 385 to 448 (PVKKLVGKNF…IAKIDITAND (64 aa)) folds into the Thioredoxin domain. 3 stretches are compositionally biased toward basic and acidic residues: residues 531 to 542 (IEDTSKQDRPVK), 549 to 567 (SIRK…EREA), and 574 to 588 (EQPK…KEEL). The segment at 531-588 (IEDTSKQDRPVKESPVLDSIRKPEEPERRKETAEREAAAAQPKEQPKPERKLEVKEEL) is disordered. The Prevents secretion from ER motif lies at 585-588 (KEEL).

This sequence belongs to the protein disulfide isomerase family. As to quaternary structure, homodimer. The homodimer is not disulfide-linked. Interacts with CLGN and ERO1A. Post-translationally, N-glycosylated. In terms of tissue distribution, testis-specific (at protein level).

The protein resides in the endoplasmic reticulum. In terms of biological role, probable redox-inactive chaperone involved in spermatogenesis. The chain is Protein disulfide-isomerase-like protein of the testis (Pdilt) from Mus musculus (Mouse).